The primary structure comprises 113 residues: MHEISLIESVVALVEDERRKQDFSRVRMIRLRLGALGHAEPEALRFCFDAVTRGTIAEGARLDIDIVLGEGWCSSCSRTVPLEERFAACPICGNAPVQMTAGDELRVAEMEVE.

Histidine 2 serves as a coordination point for Ni(2+). Residues cysteine 73, cysteine 76, cysteine 89, and cysteine 92 each coordinate Zn(2+).

This sequence belongs to the HypA/HybF family.

Its function is as follows. Involved in the maturation of [NiFe] hydrogenases. Required for nickel insertion into the metal center of the hydrogenase. This is Hydrogenase maturation factor HypA from Methylocella silvestris (strain DSM 15510 / CIP 108128 / LMG 27833 / NCIMB 13906 / BL2).